A 545-amino-acid chain; its full sequence is CTP synthase (545 aa).

An amidoligase domain region spans residues 1-267; sequence MTKFIFVTGG…AEQVLNLLQM (267 aa). Ser-13 is a CTP binding site. UTP is bound at residue Ser-13. Residues 14 to 19 and Asp-71 contribute to the ATP site; that span reads SIGKGI. Asp-71 and Glu-141 together coordinate Mg(2+). CTP-binding positions include 148–150, 188–193, and Lys-224; these read DIE and KTKPTQ. UTP contacts are provided by residues 188–193 and Lys-224; that span reads KTKPTQ. Residues 292–534 enclose the Glutamine amidotransferase type-1 domain; it reads EIAIVGKYVQ…IQAAIALSLS (243 aa). Gly-354 contributes to the L-glutamine binding site. The Nucleophile; for glutamine hydrolysis role is filled by Cys-381. Residues 382 to 385, Glu-405, and Arg-462 contribute to the L-glutamine site; that span reads LGMQ. Catalysis depends on residues His-507 and Glu-509.

It belongs to the CTP synthase family. As to quaternary structure, homotetramer.

The enzyme catalyses UTP + L-glutamine + ATP + H2O = CTP + L-glutamate + ADP + phosphate + 2 H(+). It carries out the reaction L-glutamine + H2O = L-glutamate + NH4(+). It catalyses the reaction UTP + NH4(+) + ATP = CTP + ADP + phosphate + 2 H(+). Its pathway is pyrimidine metabolism; CTP biosynthesis via de novo pathway; CTP from UDP: step 2/2. Its activity is regulated as follows. Allosterically activated by GTP, when glutamine is the substrate; GTP has no effect on the reaction when ammonia is the substrate. The allosteric effector GTP functions by stabilizing the protein conformation that binds the tetrahedral intermediate(s) formed during glutamine hydrolysis. Inhibited by the product CTP, via allosteric rather than competitive inhibition. Its function is as follows. Catalyzes the ATP-dependent amination of UTP to CTP with either L-glutamine or ammonia as the source of nitrogen. Regulates intracellular CTP levels through interactions with the four ribonucleotide triphosphates. The protein is CTP synthase of Nostoc punctiforme (strain ATCC 29133 / PCC 73102).